The chain runs to 222 residues: Probable glutathione-independent glyoxalase hsp3104 (222 aa).

Residues C124, H125, and E155 contribute to the active site.

The protein belongs to the peptidase C56 family. HSP31-like subfamily.

It is found in the cytoplasm. It carries out the reaction methylglyoxal + H2O = (R)-lactate + H(+). In terms of biological role, catalyzes the conversion of methylglyoxal (MG) to D-lactate in a single glutathione (GSH)-independent step. May play a role in detoxifying endogenously produced glyoxals. Involved in protection against reactive oxygen species (ROS). This Schizosaccharomyces pombe (strain 972 / ATCC 24843) (Fission yeast) protein is Probable glutathione-independent glyoxalase hsp3104.